The primary structure comprises 1343 residues: Spermatogenesis-associated protein 31A6 (1343 aa).

Residues 23-43 (PWVLDIFLTLVFALGFFFLLL) form a helical membrane-spanning segment. Disordered regions lie at residues 55–88 (PSPS…RECP), 106–235 (GPHL…STLI), 624–654 (DESP…EAQK), 895–951 (PRGI…REAV), 1080–1156 (VQEE…PPSV), and 1309–1331 (KAVS…SHHH). Residues 60–82 (GKRKCPVGRRRRPRGRMKNHSLR) are compositionally biased toward basic residues. Residues 165–178 (LASTPSPGPMTTSV) show a composition bias toward polar residues. A compositionally biased stretch (pro residues) spans 198–222 (PEPPALFPHPPHTPDPLACSPPPPK). Polar residues-rich tracts occupy residues 627–647 (PGTS…STGE) and 923–944 (LTYS…SSKA). Composition is skewed to basic and acidic residues over residues 1104–1123 (HKSE…RLEG) and 1133–1142 (RKTEDTHQDE).

This sequence belongs to the SPATA31 family.

Its subcellular location is the membrane. Functionally, may play a role in spermatogenesis. The protein is Spermatogenesis-associated protein 31A6 (SPATA31A6) of Homo sapiens (Human).